A 532-amino-acid polypeptide reads, in one-letter code: CTP synthase (532 aa).

An amidoligase domain region spans residues 1–267 (MTKFIFVTGG…DDIVLKILGL (267 aa)). A CTP-binding site is contributed by serine 13. Position 13 (serine 13) interacts with UTP. 14–19 (SLGKGI) contacts ATP. Position 54 (tyrosine 54) interacts with L-glutamine. Aspartate 71 contributes to the ATP binding site. Mg(2+) is bound by residues aspartate 71 and glutamate 141. CTP contacts are provided by residues 148–150 (DIE), 188–193 (KTKPTQ), and lysine 224. Residues 188-193 (KTKPTQ) and lysine 224 each bind UTP. The region spanning 292 to 532 (EIAIVGKYVE…EFVKATLANR (241 aa)) is the Glutamine amidotransferase type-1 domain. Glycine 354 is a binding site for L-glutamine. Cysteine 381 acts as the Nucleophile; for glutamine hydrolysis in catalysis. L-glutamine-binding positions include 382–385 (LGMQ), glutamate 405, and arginine 462. Catalysis depends on residues histidine 507 and glutamate 509.

This sequence belongs to the CTP synthase family. In terms of assembly, homotetramer.

The enzyme catalyses UTP + L-glutamine + ATP + H2O = CTP + L-glutamate + ADP + phosphate + 2 H(+). It carries out the reaction L-glutamine + H2O = L-glutamate + NH4(+). The catalysed reaction is UTP + NH4(+) + ATP = CTP + ADP + phosphate + 2 H(+). It functions in the pathway pyrimidine metabolism; CTP biosynthesis via de novo pathway; CTP from UDP: step 2/2. Its activity is regulated as follows. Allosterically activated by GTP, when glutamine is the substrate; GTP has no effect on the reaction when ammonia is the substrate. The allosteric effector GTP functions by stabilizing the protein conformation that binds the tetrahedral intermediate(s) formed during glutamine hydrolysis. Inhibited by the product CTP, via allosteric rather than competitive inhibition. Catalyzes the ATP-dependent amination of UTP to CTP with either L-glutamine or ammonia as the source of nitrogen. Regulates intracellular CTP levels through interactions with the four ribonucleotide triphosphates. The sequence is that of CTP synthase from Desulfitobacterium hafniense (strain Y51).